The primary structure comprises 247 residues: Putative methyltransferase YqeM (247 aa).

The protein belongs to the methyltransferase superfamily.

Functionally, may be a S-adenosyl-L-methionine (SAM)-dependent methyltransferase. In Bacillus subtilis (strain 168), this protein is Putative methyltransferase YqeM (yqeM).